A 1138-amino-acid chain; its full sequence is Tyrosine-protein kinase receptor Tie-1 (1138 aa).

The N-terminal stretch at 1-21 is a signal peptide; the sequence is MVWRVPPFLLPILFLASHVGA. Topologically, residues 22–759 are extracellular; the sequence is AVDLTLLANL…SRAAEEGLDQ (738 aa). Residues 43–105 enclose the Ig-like C2-type 1 domain; that stretch reads CVSGEAGAGR…PSDLVGVFSC (63 aa). 2 N-linked (GlcNAc...) asparagine glycosylation sites follow: Asn83 and Asn161. 3 EGF-like domains span residues 214–256, 258–303, and 305–345; these read GCGA…TRCE, ACRE…SQCQ, and ACAP…VHCE. Disulfide bonds link Cys228-Cys237, Cys231-Cys244, and Cys246-Cys255. Intrachain disulfides connect Cys315/Cys327, Cys321/Cys333, and Cys335/Cys344. The Ig-like C2-type 2 domain occupies 372–426; the sequence is CAAAGNPFPVRGSIELRKPDGTVLLSTKAIVEPEKTTAEFEVPRLVLADSGFWEC. Fibronectin type-III domains lie at 446–545, 548–642, and 646–739; these read PPVP…CPEP, QPWL…LPPS, and APRH…TLGN. Asn503, Asn596, and Asn709 each carry an N-linked (GlcNAc...) asparagine glycan. Residues 760–784 form a helical membrane-spanning segment; the sequence is QLILAVVGSVSATCLTILAALLTLV. Residues 785 to 1138 are Cytoplasmic-facing; that stretch reads CIRRSCLHRR…AGIDATAEEA (354 aa). Residues 839 to 1118 enclose the Protein kinase domain; it reads ITFEDLIGEG…RMLEARKAYV (280 aa). Residues 845–853 and Lys870 contribute to the ATP site; that span reads IGEGNFGQV. The active-site Proton acceptor is Asp979. Residue Tyr1007 is modified to Phosphotyrosine; by autocatalysis.

The protein belongs to the protein kinase superfamily. Tyr protein kinase family. Tie subfamily. In terms of assembly, heterodimer with TEK/TIE2. Interacts with SVEP1 (via C-terminus). Phosphorylated on tyrosine residues in response to ANGPT1, most likely by TEK/TIE2. In terms of tissue distribution, specifically expressed in developing vascular endothelial cells.

The protein localises to the cell membrane. The catalysed reaction is L-tyrosyl-[protein] + ATP = O-phospho-L-tyrosyl-[protein] + ADP + H(+). Transmembrane tyrosine-protein kinase that may modulate TEK/TIE2 activity and contribute to the regulation of angiogenesis. The polypeptide is Tyrosine-protein kinase receptor Tie-1 (TIE1) (Homo sapiens (Human)).